The following is a 334-amino-acid chain: 7,8-didemethyl-8-hydroxy-5-deazariboflavin synthase (334 aa).

Residues 2 to 248 form the Radical SAM core domain; that stretch reads VSYSKNVFVP…PDVPVQVPPN (247 aa). [4Fe-4S] cluster is bound by residues Cys16, Cys20, and Cys23.

Belongs to the radical SAM superfamily. CofG family. Consists of two subunits, CofG and CofH. It depends on [4Fe-4S] cluster as a cofactor.

The enzyme catalyses 5-amino-5-(4-hydroxybenzyl)-6-(D-ribitylimino)-5,6-dihydrouracil + S-adenosyl-L-methionine = 7,8-didemethyl-8-hydroxy-5-deazariboflavin + 5'-deoxyadenosine + L-methionine + NH4(+) + H(+). It functions in the pathway cofactor biosynthesis; coenzyme F0 biosynthesis. In terms of biological role, catalyzes the radical-mediated synthesis of 7,8-didemethyl-8-hydroxy-5-deazariboflavin from 5-amino-5-(4-hydroxybenzyl)-6-(D-ribitylimino)-5,6-dihydrouracil. This Methanopyrus kandleri (strain AV19 / DSM 6324 / JCM 9639 / NBRC 100938) protein is 7,8-didemethyl-8-hydroxy-5-deazariboflavin synthase.